A 386-amino-acid polypeptide reads, in one-letter code: S-adenosylmethionine synthase (386 aa).

H16 contributes to the ATP binding site. A Mg(2+)-binding site is contributed by D18. E44 provides a ligand contact to K(+). L-methionine is bound by residues E57 and Q100. Residues 100–110 (QSPDINQGVDR) form a flexible loop region. ATP is bound by residues 164 to 166 (DGK), 230 to 231 (KF), D239, 245 to 246 (RK), A262, and K266. D239 contacts L-methionine. K270 provides a ligand contact to L-methionine.

The protein belongs to the AdoMet synthase family. Homotetramer; dimer of dimers. It depends on Mg(2+) as a cofactor. Requires K(+) as cofactor.

The protein resides in the cytoplasm. It catalyses the reaction L-methionine + ATP + H2O = S-adenosyl-L-methionine + phosphate + diphosphate. Its pathway is amino-acid biosynthesis; S-adenosyl-L-methionine biosynthesis; S-adenosyl-L-methionine from L-methionine: step 1/1. Functionally, catalyzes the formation of S-adenosylmethionine (AdoMet) from methionine and ATP. The overall synthetic reaction is composed of two sequential steps, AdoMet formation and the subsequent tripolyphosphate hydrolysis which occurs prior to release of AdoMet from the enzyme. The polypeptide is S-adenosylmethionine synthase (Wolinella succinogenes (strain ATCC 29543 / DSM 1740 / CCUG 13145 / JCM 31913 / LMG 7466 / NCTC 11488 / FDC 602W) (Vibrio succinogenes)).